A 359-amino-acid chain; its full sequence is Pyruvate dehydrogenase E1 component subunit beta, mitochondrial (359 aa).

Residues 1–19 constitute a mitochondrion transit peptide; the sequence is MLGVIRNKTIRPSFSAFRF. Glu82 lines the thiamine diphosphate pocket. 4 residues coordinate K(+): Ile135, Ala183, Ile184, and Asp186.

In terms of assembly, tetramer of 2 alpha and 2 beta subunits. The cofactor is thiamine diphosphate.

It localises to the mitochondrion matrix. The catalysed reaction is N(6)-[(R)-lipoyl]-L-lysyl-[protein] + pyruvate + H(+) = N(6)-[(R)-S(8)-acetyldihydrolipoyl]-L-lysyl-[protein] + CO2. Functionally, the pyruvate dehydrogenase complex catalyzes the overall conversion of pyruvate to acetyl-CoA and CO(2). It contains multiple copies of three enzymatic components: pyruvate dehydrogenase (E1), dihydrolipoamide acetyltransferase (E2) and lipoamide dehydrogenase (E3). The sequence is that of Pyruvate dehydrogenase E1 component subunit beta, mitochondrial from Pisum sativum (Garden pea).